We begin with the raw amino-acid sequence, 466 residues long: tRNA-2-methylthio-N(6)-dimethylallyladenosine synthase (466 aa).

The region spanning Lys3–Arg123 is the MTTase N-terminal domain. [4Fe-4S] cluster contacts are provided by Cys12, Cys48, Cys86, Cys162, Cys166, and Cys169. The Radical SAM core domain occupies Ser148–Ala381. Residues Thr384–Val446 form the TRAM domain.

It belongs to the methylthiotransferase family. MiaB subfamily. In terms of assembly, monomer. It depends on [4Fe-4S] cluster as a cofactor.

It is found in the cytoplasm. The catalysed reaction is N(6)-dimethylallyladenosine(37) in tRNA + (sulfur carrier)-SH + AH2 + 2 S-adenosyl-L-methionine = 2-methylsulfanyl-N(6)-dimethylallyladenosine(37) in tRNA + (sulfur carrier)-H + 5'-deoxyadenosine + L-methionine + A + S-adenosyl-L-homocysteine + 2 H(+). Its function is as follows. Catalyzes the methylthiolation of N6-(dimethylallyl)adenosine (i(6)A), leading to the formation of 2-methylthio-N6-(dimethylallyl)adenosine (ms(2)i(6)A) at position 37 in tRNAs that read codons beginning with uridine. This is tRNA-2-methylthio-N(6)-dimethylallyladenosine synthase from Rhodospirillum centenum (strain ATCC 51521 / SW).